The following is a 384-amino-acid chain: 5-cytosine rRNA methyltransferase NSUN4 (384 aa).

Residues methionine 1 to histidine 25 constitute a mitochondrion transit peptide. Glycine 185, glycine 186, lysine 187, and aspartate 204 together coordinate S-adenosyl-L-methionine. Phosphoserine is present on serine 206. Residues arginine 209, aspartate 237, glycine 238, and aspartate 255 each coordinate S-adenosyl-L-methionine. Catalysis depends on cysteine 310, which acts as the Nucleophile.

This sequence belongs to the class I-like SAM-binding methyltransferase superfamily. RsmB/NOP family. As to quaternary structure, heterodimer with MTERFD2/MTERF4; this interaction seems to be required for NSUN4 recruitment to the mitochondrial large ribosomal subunit.

The protein localises to the mitochondrion. It carries out the reaction a cytidine in rRNA + S-adenosyl-L-methionine = a 5-methylcytidine in rRNA + S-adenosyl-L-homocysteine + H(+). The catalysed reaction is a cytidine in mRNA + S-adenosyl-L-methionine = a 5-methylcytidine in mRNA + S-adenosyl-L-homocysteine + H(+). In terms of biological role, mitochondrial RNA cytosine C(5)-methyltransferase that methylates cytosine to 5-methylcytosine (m5C) in various RNAs, such as rRNAs, mRNAs and some long non-coding RNAs (lncRNAs). Involved in mitochondrial ribosome small subunit (SSU) maturation by catalyzing methylation of mitochondrial 12S rRNA; the function is independent of MTERFD2/MTERF4 and assembled mitochondrial ribosome large subunit (LSU). Targeted to LSU by MTERFD2/MTERF4 and probably is involved in a final step in ribosome biogenesis to ensure that SSU and LSU are assembled. In vitro can methylate 16S rRNA of the LSU; the methylation is enhanced by MTERFD/MTERF4. Also acts as a regulator of innate immunity by marking double-stranded mitochondrial RNAs(mt-dsRNAs) generated in response to stress: catalyzes m5C modification on mitochondrial RNAs, such as a mRNAs and lncRNAs, with a preference for the termini of light-strand lncRNAs, promoting their degradation and cytosolic release. Modified light-strand lncRNAs are then recognized by C1QBP reader and recruited to the mitochondrial degradosome complex, which promotes their degradation. The protein is 5-cytosine rRNA methyltransferase NSUN4 of Homo sapiens (Human).